The primary structure comprises 380 residues: Apolipoprotein A-IV (380 aa).

The first 20 residues, 1 to 20, serve as a signal peptide directing secretion; it reads MFLKAVVLSLALVAVTGAEA. Repeat copies occupy residues 33–54, 60–81, 82–103, 115–136, 137–158, 159–180, 181–202, 203–224, 225–246, 247–268, 269–286, 287–308, and 309–330. The segment at 33–330 is 13 X 22 AA approximate tandem repeats; that stretch reads DYFSQLGNNA…QLDTLRQKLG (298 aa). Positions 361 to 380 are disordered; that stretch reads KESQAPALPAQEEMPVPLGG.

Belongs to the apolipoprotein A1/A4/E family. As to quaternary structure, homodimer. As to expression, secreted in plasma.

The protein localises to the secreted. In terms of biological role, may have a role in chylomicrons and VLDL secretion and catabolism. Required for efficient activation of lipoprotein lipase by ApoC-II; potent activator of LCAT. Apoa-IV is a major component of HDL and chylomicrons. The sequence is that of Apolipoprotein A-IV (APOA4) from Bos taurus (Bovine).